The primary structure comprises 380 residues: DNA primase small subunit PriS (380 aa).

Residues aspartate 103, aspartate 105, and aspartate 284 contribute to the active site.

Belongs to the eukaryotic-type primase small subunit family. Heterodimer of a small subunit (PriS) and a large subunit (PriL). Mg(2+) serves as cofactor. It depends on Mn(2+) as a cofactor.

Functionally, catalytic subunit of DNA primase, an RNA polymerase that catalyzes the synthesis of short RNA molecules used as primers for DNA polymerase during DNA replication. The small subunit contains the primase catalytic core and has DNA synthesis activity on its own. Binding to the large subunit stabilizes and modulates the activity, increasing the rate of DNA synthesis while decreasing the length of the DNA fragments, and conferring RNA synthesis capability. The DNA polymerase activity may enable DNA primase to also catalyze primer extension after primer synthesis. May also play a role in DNA repair. This Methanocorpusculum labreanum (strain ATCC 43576 / DSM 4855 / Z) protein is DNA primase small subunit PriS.